A 379-amino-acid polypeptide reads, in one-letter code: Alkanesulfonate monooxygenase (379 aa).

This sequence belongs to the SsuD family.

The enzyme catalyses an alkanesulfonate + FMNH2 + O2 = an aldehyde + FMN + sulfite + H2O + 2 H(+). Its function is as follows. Catalyzes the desulfonation of aliphatic sulfonates. This Pseudomonas syringae pv. syringae (strain B728a) protein is Alkanesulfonate monooxygenase.